The chain runs to 487 residues: Berbamunine synthase (487 aa).

Cys-429 contacts heme.

This sequence belongs to the cytochrome P450 family. The cofactor is heme.

The protein resides in the endoplasmic reticulum membrane. It localises to the microsome membrane. The enzyme catalyses (R)-N-methylcoclaurine + (S)-N-methylcoclaurine + reduced [NADPH--hemoprotein reductase] + O2 = berbamunine + oxidized [NADPH--hemoprotein reductase] + 2 H2O + H(+). The protein operates within alkaloid biosynthesis; berbamunine biosynthesis; berbamunine from (R)-N-methylcoclaurine and (S)-N-methylcoclaurine: step 1/1. Forms the bisbenzylisoquinoline alkaloid berbamunine by phenol oxidation of N-methylcoclaurine without the incorporation of oxygen into the product. Oxidatively couples either two molecules of (R)-N-methylcoclaurine to form the (R,R) dimer guattegaumerine or one molecule each of (R)- and (S)-N-methylcoclaurine to form the (R,S) dimer berbamunine. The protein is Berbamunine synthase (CYP80A1) of Berberis stolonifera (Barberry).